The primary structure comprises 968 residues: Chaperone protein ClpB3, chloroplastic (968 aa).

Residues 1-67 (MATATTTATA…RLDHRPFVVR (67 aa)) constitute a chloroplast transit peptide. The Clp R domain maps to 78–222 (TQQEFTEMAW…KSAIESIRGK (145 aa)). Repeat stretches follow at residues 82-147 (FTEM…IQRQ) and 159-222 (LGRD…IRGK). Positions 237–485 (LEKYGKDLTA…KLKMEITSKP (249 aa)) are i. ATP is bound at residue 282–289 (GEPGVGKT). The stretch at 488–606 (LDELDRSVIK…NEYLSSGKSM (119 aa)) forms a coiled coil. Residues 611–802 (VLGSDIAEIV…VIIMTSNVGS (192 aa)) are II. Residue 685-692 (GPTGVGKT) participates in ATP binding.

This sequence belongs to the ClpA/ClpB family.

The protein resides in the plastid. It is found in the chloroplast. Functionally, molecular chaperone essential for chloroplast development and seedling viability. Mediates internal thylakoid membrane formation and confers thermotolerance to chloroplasts during heat stress. This Arabidopsis thaliana (Mouse-ear cress) protein is Chaperone protein ClpB3, chloroplastic (CLPB3).